Consider the following 474-residue polypeptide: Synaptotagmin-15B (474 aa).

Disordered regions lie at residues 1–62 (MGVV…AASG) and 75–128 (PRAA…PPAV). The span at 75–88 (PRAAAGHQQHHGPP) shows a compositional bias: low complexity. C2 domains follow at residues 200–317 (CLGR…RRVI) and 331–452 (EFGD…EHWD).

It belongs to the synaptotagmin family.

The chain is Synaptotagmin-15B from Homo sapiens (Human).